The sequence spans 158 residues: S-ribosylhomocysteine lyase (158 aa).

Positions 54, 58, and 124 each coordinate Fe cation.

Belongs to the LuxS family. In terms of assembly, homodimer. Fe cation is required as a cofactor.

The enzyme catalyses S-(5-deoxy-D-ribos-5-yl)-L-homocysteine = (S)-4,5-dihydroxypentane-2,3-dione + L-homocysteine. In terms of biological role, involved in the synthesis of autoinducer 2 (AI-2) which is secreted by bacteria and is used to communicate both the cell density and the metabolic potential of the environment. The regulation of gene expression in response to changes in cell density is called quorum sensing. Catalyzes the transformation of S-ribosylhomocysteine (RHC) to homocysteine (HC) and 4,5-dihydroxy-2,3-pentadione (DPD). This chain is S-ribosylhomocysteine lyase, found in Limosilactobacillus reuteri (strain DSM 20016) (Lactobacillus reuteri).